The following is a 63-amino-acid chain: MSPEEILQKAIEMEREAIETYAEMKREADRETAELLDFLISQEREHIKLLNDRLKVVRLLKKE.

This is an uncharacterized protein from Archaeoglobus fulgidus (strain ATCC 49558 / DSM 4304 / JCM 9628 / NBRC 100126 / VC-16).